A 254-amino-acid chain; its full sequence is UPF0246 protein CPR_2119 (254 aa).

The protein belongs to the UPF0246 family.

The protein is UPF0246 protein CPR_2119 of Clostridium perfringens (strain SM101 / Type A).